Here is a 474-residue protein sequence, read N- to C-terminus: Methylenetetrahydrofolate--tRNA-(uracil-5-)-methyltransferase TrmFO (474 aa).

Glycine 9 to glycine 14 serves as a coordination point for FAD.

This sequence belongs to the MnmG family. TrmFO subfamily. FAD is required as a cofactor.

The protein localises to the cytoplasm. It catalyses the reaction uridine(54) in tRNA + (6R)-5,10-methylene-5,6,7,8-tetrahydrofolate + NADH + H(+) = 5-methyluridine(54) in tRNA + (6S)-5,6,7,8-tetrahydrofolate + NAD(+). The enzyme catalyses uridine(54) in tRNA + (6R)-5,10-methylene-5,6,7,8-tetrahydrofolate + NADPH + H(+) = 5-methyluridine(54) in tRNA + (6S)-5,6,7,8-tetrahydrofolate + NADP(+). In terms of biological role, catalyzes the folate-dependent formation of 5-methyl-uridine at position 54 (M-5-U54) in all tRNAs. In Methylorubrum extorquens (strain PA1) (Methylobacterium extorquens), this protein is Methylenetetrahydrofolate--tRNA-(uracil-5-)-methyltransferase TrmFO.